We begin with the raw amino-acid sequence, 432 residues long: Gamma-glutamyl phosphate reductase (432 aa).

The protein belongs to the gamma-glutamyl phosphate reductase family.

It is found in the cytoplasm. It carries out the reaction L-glutamate 5-semialdehyde + phosphate + NADP(+) = L-glutamyl 5-phosphate + NADPH + H(+). It participates in amino-acid biosynthesis; L-proline biosynthesis; L-glutamate 5-semialdehyde from L-glutamate: step 2/2. Its function is as follows. Catalyzes the NADPH-dependent reduction of L-glutamate 5-phosphate into L-glutamate 5-semialdehyde and phosphate. The product spontaneously undergoes cyclization to form 1-pyrroline-5-carboxylate. The protein is Gamma-glutamyl phosphate reductase of Corynebacterium glutamicum (strain R).